Reading from the N-terminus, the 420-residue chain is MWWRDLTRLRLWLKREAIPGEGRKAAKVNAGVGEKGIYTASSRGGPPSARSKAVTVVAEGAASRSWLSMDAPELGPGLVERLEQLATCPLCGGSFEDPVLLACEHSFCRACLARRWGTPPATGTEASPTACPCCGLPCPRRSLRSNVRLAVEVRISRELREKLAEPGARAGRRRGGRIPTMGCLDLPGEDMRKTWRRFEVPTSKSSNSEDDLPEDYPVVKKMLHRLTADLTLDPGTAHRRLLISADRRSVQLAPPGTPAPPDGPKRFDQLPAVLGAQGFGAGRHCWEVETADAASCRDSSGEDADDEESHYAVGAAGESVQRKGCVRLCPAGAVWAVEGRGGRLWALTAPEPTLLGGVEPPPRRIRVDLDWERGRVAFYDGRSLDLLYAFQAPGPLGERIFPLFCTCDPRAPLRIVPAES.

The RING-type zinc-finger motif lies at 88-135; it reads CPLCGGSFEDPVLLACEHSFCRACLARRWGTPPATGTEASPTACPCCG. The 211-residue stretch at 210–420 folds into the B30.2/SPRY domain; the sequence is DDLPEDYPVV…APLRIVPAES (211 aa).

In terms of tissue distribution, expressed in testis.

The protein resides in the cytoplasm. The enzyme catalyses S-ubiquitinyl-[E2 ubiquitin-conjugating enzyme]-L-cysteine + [acceptor protein]-L-lysine = [E2 ubiquitin-conjugating enzyme]-L-cysteine + N(6)-ubiquitinyl-[acceptor protein]-L-lysine.. It participates in protein modification; protein ubiquitination. In terms of biological role, plays an inhibitory role in anti-RNA viral innate immunity by targeting the adapter DDX3X and promoting its 'Lys-48'-linked polyubiquitination. Alternatively, enhances the cGAS-STING pathway activation by promoting 'Lys-63'-linked ubiquitination of STING1, facilitating the STING1-TBK1 complex formation and STING1 activation. Functionally, (Microbial infection) Plays a positive role in human immunodeficiency virus (HIV-1) replication. This is RING finger protein 39 (RNF39) from Homo sapiens (Human).